A 169-amino-acid chain; its full sequence is Large ribosomal subunit protein uL10 (169 aa).

The protein belongs to the universal ribosomal protein uL10 family. Part of the 50S ribosomal subunit.

The polypeptide is Large ribosomal subunit protein uL10 (rplJ) (Deinococcus radiodurans (strain ATCC 13939 / DSM 20539 / JCM 16871 / CCUG 27074 / LMG 4051 / NBRC 15346 / NCIMB 9279 / VKM B-1422 / R1)).